A 227-amino-acid chain; its full sequence is Cytochrome c oxidase subunit 2 (227 aa).

At 1-14 the chain is on the mitochondrial intermembrane side; sequence MAYPFQLGLQDATS. The helical transmembrane segment at 15-45 threads the bilayer; sequence PIMEELTNFHDHTLMIVFLISSLVLYLISLM. Residues 46 to 59 lie on the Mitochondrial matrix side of the membrane; it reads LSTKLIHTSTMDAQ. Residues 60 to 87 form a helical membrane-spanning segment; sequence EVETIWTILPAIILIMIALPSLRILYMM. Over 88–227 the chain is Mitochondrial intermembrane; sequence DEINNPALTV…LFENWSISMS (140 aa). The Cu cation site is built by histidine 161, cysteine 196, glutamate 198, cysteine 200, histidine 204, and methionine 207. Position 198 (glutamate 198) interacts with Mg(2+).

Belongs to the cytochrome c oxidase subunit 2 family. Component of the cytochrome c oxidase (complex IV, CIV), a multisubunit enzyme composed of 14 subunits. The complex is composed of a catalytic core of 3 subunits MT-CO1, MT-CO2 and MT-CO3, encoded in the mitochondrial DNA, and 11 supernumerary subunits COX4I, COX5A, COX5B, COX6A, COX6B, COX6C, COX7A, COX7B, COX7C, COX8 and NDUFA4, which are encoded in the nuclear genome. The complex exists as a monomer or a dimer and forms supercomplexes (SCs) in the inner mitochondrial membrane with NADH-ubiquinone oxidoreductase (complex I, CI) and ubiquinol-cytochrome c oxidoreductase (cytochrome b-c1 complex, complex III, CIII), resulting in different assemblies (supercomplex SCI(1)III(2)IV(1) and megacomplex MCI(2)III(2)IV(2)). Found in a complex with TMEM177, COA6, COX18, COX20, SCO1 and SCO2. Interacts with TMEM177 in a COX20-dependent manner. Interacts with COX20. Interacts with COX16. Cu cation serves as cofactor.

It localises to the mitochondrion inner membrane. The enzyme catalyses 4 Fe(II)-[cytochrome c] + O2 + 8 H(+)(in) = 4 Fe(III)-[cytochrome c] + 2 H2O + 4 H(+)(out). Its function is as follows. Component of the cytochrome c oxidase, the last enzyme in the mitochondrial electron transport chain which drives oxidative phosphorylation. The respiratory chain contains 3 multisubunit complexes succinate dehydrogenase (complex II, CII), ubiquinol-cytochrome c oxidoreductase (cytochrome b-c1 complex, complex III, CIII) and cytochrome c oxidase (complex IV, CIV), that cooperate to transfer electrons derived from NADH and succinate to molecular oxygen, creating an electrochemical gradient over the inner membrane that drives transmembrane transport and the ATP synthase. Cytochrome c oxidase is the component of the respiratory chain that catalyzes the reduction of oxygen to water. Electrons originating from reduced cytochrome c in the intermembrane space (IMS) are transferred via the dinuclear copper A center (CU(A)) of subunit 2 and heme A of subunit 1 to the active site in subunit 1, a binuclear center (BNC) formed by heme A3 and copper B (CU(B)). The BNC reduces molecular oxygen to 2 water molecules using 4 electrons from cytochrome c in the IMS and 4 protons from the mitochondrial matrix. This is Cytochrome c oxidase subunit 2 (MT-CO2) from Gerbilliscus robustus (Fringe-tailed gerbil).